Consider the following 469-residue polypeptide: Cytochrome P450 85A1 (469 aa).

The chain crosses the membrane as a helical span at residues 1 to 21 (MVLVAIGVVVAAAVVVSSLLL). Cys419 contributes to the heme binding site.

The protein belongs to the cytochrome P450 family. Heme is required as a cofactor. In terms of tissue distribution, expressed at low levels in all the tissues, but preferentially in the leaf sheath.

It localises to the membrane. It catalyses the reaction 6-deoxoteasterone + reduced [NADPH--hemoprotein reductase] + O2 = 6alpha-hydroxyteasterone + oxidized [NADPH--hemoprotein reductase] + H2O + H(+). The enzyme catalyses 6alpha-hydroxytyphasterol + reduced [NADPH--hemoprotein reductase] + O2 = teasterone + oxidized [NADPH--hemoprotein reductase] + 2 H2O + H(+). The catalysed reaction is 3-dehydro-6-deoxoteasterone + reduced [NADPH--hemoprotein reductase] + O2 = 3-dehydro-6alpha-hydroxyteasterone + oxidized [NADPH--hemoprotein reductase] + H2O + H(+). It carries out the reaction 3-dehydro-6alpha-hydroxyteasterone + reduced [NADPH--hemoprotein reductase] + O2 = 3-dehydroteasterone + oxidized [NADPH--hemoprotein reductase] + 2 H2O + H(+). It catalyses the reaction 6-deoxotyphasterol + reduced [NADPH--hemoprotein reductase] + O2 = 6alpha-hydroxytyphasterol + oxidized [NADPH--hemoprotein reductase] + H2O + H(+). The enzyme catalyses 6alpha-hydroxytyphasterol + reduced [NADPH--hemoprotein reductase] + O2 = typhasterol + oxidized [NADPH--hemoprotein reductase] + 2 H2O + H(+). The catalysed reaction is 3-dehydro-6-deoxoteasterone + 2 reduced [NADPH--hemoprotein reductase] + 2 O2 = 3-dehydroteasterone + 2 oxidized [NADPH--hemoprotein reductase] + 3 H2O + 2 H(+). It carries out the reaction 6-deoxoteasterone + 2 reduced [NADPH--hemoprotein reductase] + 2 O2 = teasterone + 2 oxidized [NADPH--hemoprotein reductase] + 3 H2O + 2 H(+). It catalyses the reaction 6-deoxotyphasterol + 2 reduced [NADPH--hemoprotein reductase] + 2 O2 = typhasterol + 2 oxidized [NADPH--hemoprotein reductase] + 3 H2O + 2 H(+). Its pathway is plant hormone biosynthesis; brassinosteroid biosynthesis. Its function is as follows. Catalyzes the C6-oxidation step in brassinosteroids biosynthesis. May convert 6-deoxoteasterone (6-deoxoTE) to teasterone (TE), 3-dehydro-6-deoxoteasterone (6-deoxo3DT, 6-deoxo3DHT) to 3-dehydroteasterone (3DT, 3-DHT), and 6-deoxotyphasterol (6-deoxoTY) to typhasterol (TY). Involved in the organization and elongation of the leaf and stem cells. Not able to convert 6-deoxocastasterone (6-deoxoCS) and castasterone (CS) to brassinolide (BL). In Oryza sativa subsp. japonica (Rice), this protein is Cytochrome P450 85A1.